The sequence spans 302 residues: Small ribosomal subunit protein uS2 (302 aa).

The interval Glu-275–Glu-302 is disordered. Positions Ala-287–Glu-302 are enriched in basic residues.

This sequence belongs to the universal ribosomal protein uS2 family.

The polypeptide is Small ribosomal subunit protein uS2 (Opitutus terrae (strain DSM 11246 / JCM 15787 / PB90-1)).